Consider the following 313-residue polypeptide: Protein OPG185 (313 aa).

The signal sequence occupies residues 1-16 (MTQLPILLLLISLVYA). Residues 17–274 (TPSPQTSKKI…TSISNYKTKD (258 aa)) are Virion surface-facing. Residues Asn-37, Asn-69, Asn-112, Asn-159, Asn-194, and Asn-252 are each glycosylated (N-linked (GlcNAc...) asparagine; by host). The helical transmembrane segment at 275-295 (FVEIFGITTLIILSAVAIFCI) threads the bilayer. Topologically, residues 296–313 (TYYICNKHPRKYKTENKV) are intravirion.

The protein belongs to the orthopoxvirus OPG185 family. Heterodimerizes with OPG040. The heterodimer OPG185-OPG040 interacts with components of the entry fusion complex OPG143 and OPG094. Heterodimer with C3/VPC protein; disulfide-linked. Glycosylated; contains phosphate and sulfate-substituted glycans. O-glycosylation is required for hemagglutination and hemadsorption activities of infected cell membranes.

The protein resides in the virion membrane. The protein localises to the host membrane. In terms of biological role, prevents cell to cell fusion by interacting with and directing the viral OPG040 protein on the host plasma membrane. The OPG185-OPG040 complex associates with components of the entry fusion complex (EFC) presumably to avoid superinfection and syncytium formation. Via its interaction with C3/VCP protein, protects the infected cell and probably also the extracellular enveloped virus from complement attack. This Monkeypox virus protein is Protein OPG185 (OPG185).